The chain runs to 394 residues: Probable pectate lyase 16 (394 aa).

The N-terminal stretch at 1-22 (MTLFTVSCLLVVLFLCHSLVHA) is a signal peptide. The Ca(2+) site is built by Asp192, Asp216, and Asp220. Residue Arg272 is part of the active site.

It belongs to the polysaccharide lyase 1 family. Ca(2+) serves as cofactor.

It catalyses the reaction Eliminative cleavage of (1-&gt;4)-alpha-D-galacturonan to give oligosaccharides with 4-deoxy-alpha-D-galact-4-enuronosyl groups at their non-reducing ends.. It participates in glycan metabolism; pectin degradation; 2-dehydro-3-deoxy-D-gluconate from pectin: step 2/5. The polypeptide is Probable pectate lyase 16 (Arabidopsis thaliana (Mouse-ear cress)).